Reading from the N-terminus, the 250-residue chain is Global transcriptional regulator CodY (250 aa).

Residues 1–147 (MSTLLEKTRK…GATVVGLEIL (147 aa)) are GAF domain. The H-T-H motif DNA-binding region spans 195-214 (ASKIADKVGITRSVIVNALR).

It belongs to the CodY family.

The protein localises to the cytoplasm. In terms of biological role, DNA-binding global transcriptional regulator which is involved in the adaptive response to starvation and acts by directly or indirectly controlling the expression of numerous genes in response to nutrient availability. During rapid exponential growth, CodY is highly active and represses genes whose products allow adaptation to nutrient depletion. The sequence is that of Global transcriptional regulator CodY from Thermoanaerobacter sp. (strain X514).